Here is a 259-residue protein sequence, read N- to C-terminus: Phosphate import ATP-binding protein PstB (259 aa).

In terms of domain architecture, ABC transporter spans Ala10–Ile254. Gly43 to Ser50 provides a ligand contact to ATP.

Belongs to the ABC transporter superfamily. Phosphate importer (TC 3.A.1.7) family. The complex is composed of two ATP-binding proteins (PstB), two transmembrane proteins (PstC and PstA) and a solute-binding protein (PstS).

Its subcellular location is the cell inner membrane. It carries out the reaction phosphate(out) + ATP + H2O = ADP + 2 phosphate(in) + H(+). Part of the ABC transporter complex PstSACB involved in phosphate import. Responsible for energy coupling to the transport system. The protein is Phosphate import ATP-binding protein PstB of Methylobacillus flagellatus (strain ATCC 51484 / DSM 6875 / VKM B-1610 / KT).